The sequence spans 402 residues: Deoxyguanosinetriphosphate triphosphohydrolase-like protein 2 (402 aa).

An HD domain is found at 72–215; that stretch reads RLTHSLEVAQ…MDLADEIAYA (144 aa).

The protein belongs to the dGTPase family. Type 2 subfamily.

The polypeptide is Deoxyguanosinetriphosphate triphosphohydrolase-like protein 2 (Vibrio cholerae serotype O1 (strain ATCC 39315 / El Tor Inaba N16961)).